The sequence spans 309 residues: tRNA uridine(34) hydroxylase (309 aa).

The Rhodanese domain maps to 130–225; it reads RGEEVVFFDG…YGEKYGNDGL (96 aa). Catalysis depends on C185, which acts as the Cysteine persulfide intermediate.

It belongs to the TrhO family.

It catalyses the reaction uridine(34) in tRNA + AH2 + O2 = 5-hydroxyuridine(34) in tRNA + A + H2O. Functionally, catalyzes oxygen-dependent 5-hydroxyuridine (ho5U) modification at position 34 in tRNAs. In Corynebacterium aurimucosum (strain ATCC 700975 / DSM 44827 / CIP 107346 / CN-1) (Corynebacterium nigricans), this protein is tRNA uridine(34) hydroxylase.